We begin with the raw amino-acid sequence, 130 residues long: Small ribosomal subunit protein uS9 (130 aa).

This sequence belongs to the universal ribosomal protein uS9 family.

In Paraburkholderia phymatum (strain DSM 17167 / CIP 108236 / LMG 21445 / STM815) (Burkholderia phymatum), this protein is Small ribosomal subunit protein uS9.